A 284-amino-acid chain; its full sequence is Quinate/shikimate dehydrogenase (NAD(+)) (284 aa).

Positions 18 and 70 each coordinate shikimate. Residues S18–T20 and T70 each bind L-quinate. Y73 (proton acceptor) is an active-site residue. The shikimate site is built by K74, N95, and D111. 3 residues coordinate L-quinate: K74, N95, and D111. Residues G137–G138, D159, R164, T203–G206, A214, V229, and G252 each bind NAD(+). A shikimate-binding site is contributed by Q259. An L-quinate-binding site is contributed by Q259.

The protein belongs to the shikimate dehydrogenase family. In terms of assembly, homodimer.

The enzyme catalyses L-quinate + NAD(+) = 3-dehydroquinate + NADH + H(+). The catalysed reaction is shikimate + NAD(+) = 3-dehydroshikimate + NADH + H(+). It participates in metabolic intermediate biosynthesis; chorismate biosynthesis; chorismate from D-erythrose 4-phosphate and phosphoenolpyruvate: step 4/7. It functions in the pathway aromatic compound metabolism; 3,4-dihydroxybenzoate biosynthesis; 3-dehydroquinate from D-quinate (NAD(+) route). Involved in the biosynthesis of the chorismate, which leads to the biosynthesis of aromatic amino acids, and plays a key role in the quinate degradation pathway. Catalyzes the NAD(+)-dependent oxidation of both quinate and shikimate to 3-dehydroquinate and 3-dehydroshikimate, respectively. It can only use NAD. This Corynebacterium efficiens (strain DSM 44549 / YS-314 / AJ 12310 / JCM 11189 / NBRC 100395) protein is Quinate/shikimate dehydrogenase (NAD(+)).